A 176-amino-acid chain; its full sequence is Ribosome maturation factor RimM (176 aa).

The region spanning 96 to 176 is the PRC barrel domain; the sequence is PADEFYWRDL…QILVDWDPDF (81 aa).

It belongs to the RimM family. Binds ribosomal protein uS19.

The protein resides in the cytoplasm. Functionally, an accessory protein needed during the final step in the assembly of 30S ribosomal subunit, possibly for assembly of the head region. Essential for efficient processing of 16S rRNA. May be needed both before and after RbfA during the maturation of 16S rRNA. It has affinity for free ribosomal 30S subunits but not for 70S ribosomes. In Shewanella baltica (strain OS223), this protein is Ribosome maturation factor RimM.